The following is a 314-amino-acid chain: MSIDSSTSANIETLPVYSDSSNEYIQVIYQNPNIYEHEENNFKSVFTKSEIKSGQLILLEHVLVNDSTNSYLIIENNEYLFDMSHPRTDKFSECSEENRRLQAIKKLSSNCFGIDGNKLLTCAIQKINHSCTPNCAVNISEKYNFGGTHIVFMELFSINNIPANTEITISYGPVTGHKRDFECLCGKSLEEREKIFSIVCGLSRKISQLNNDLIKKYIYVYTTSDLGKKIMLNHFLATKGIYINKDKIVAITESGAETINNLVYKYMKIKESDQTNKKITSHKIKMFMTIIHACLFPEDSTDSSESVVLMREKN.

Residues 23–172 (EYIQVIYQNP…ANTEITISYG (150 aa)) form the SET domain.

Belongs to the class V-like SAM-binding methyltransferase superfamily.

This is Putative SET domain-containing protein L222 from Acanthamoeba polyphaga mimivirus (APMV).